The chain runs to 325 residues: Transaldolase (325 aa).

Lysine 125 (schiff-base intermediate with substrate) is an active-site residue.

It belongs to the transaldolase family. Type 2 subfamily.

The protein localises to the cytoplasm. It catalyses the reaction D-sedoheptulose 7-phosphate + D-glyceraldehyde 3-phosphate = D-erythrose 4-phosphate + beta-D-fructose 6-phosphate. It participates in carbohydrate degradation; pentose phosphate pathway; D-glyceraldehyde 3-phosphate and beta-D-fructose 6-phosphate from D-ribose 5-phosphate and D-xylulose 5-phosphate (non-oxidative stage): step 2/3. Functionally, transaldolase is important for the balance of metabolites in the pentose-phosphate pathway. The chain is Transaldolase from Campylobacter jejuni subsp. jejuni serotype O:6 (strain 81116 / NCTC 11828).